The chain runs to 66 residues: Large ribosomal subunit protein bL35 (66 aa).

Residues 1–26 (MPKMKTHRGSAKRFKKTGSGKLKRSH) are compositionally biased toward basic residues. The disordered stretch occupies residues 1–48 (MPKMKTHRGSAKRFKKTGSGKLKRSHAYTSHLFANKSQKQKRKLRKSA).

The protein belongs to the bacterial ribosomal protein bL35 family. Part of the 50S ribosomal subunit.

This is Large ribosomal subunit protein bL35 from Bacillus subtilis (strain 168).